The following is a 358-amino-acid chain: Trans-anol O-methyltransferase 1 (358 aa).

The S-adenosyl-L-methionine site is built by glycine 201, aspartate 224, aspartate 244, methionine 245, and arginine 259. The Proton acceptor role is filled by histidine 262.

It belongs to the class I-like SAM-binding methyltransferase superfamily. Cation-independent O-methyltransferase family. COMT subfamily. As to expression, highly expressed in developing fruits. Expressed at low levels in roots, young leaves, buds and flowers.

The catalysed reaction is (E)-anol + S-adenosyl-L-methionine = (E)-anethole + S-adenosyl-L-homocysteine + H(+). It carries out the reaction (E)-isoeugenol + S-adenosyl-L-methionine = (E)-isomethyleugenol + S-adenosyl-L-homocysteine + H(+). Its pathway is aromatic compound metabolism; phenylpropanoid biosynthesis. Inhibited by zinc and copper. In terms of biological role, phenylpropene O-methyltransferase that catalyzes the conversion of trans-anol to trans-anethole and isoeugenol to isomethyleugenol. Phenylpropenes are the primary constituents of various essential plant oils. They are produced as antimicrobial and antianimal compounds, or as floral attractants of pollinators. This chain is Trans-anol O-methyltransferase 1 (AIMT1), found in Pimpinella anisum (Anise).